Consider the following 383-residue polypeptide: AP-1-like transcription factor YAP6 (383 aa).

Disordered stretches follow at residues 1–64 (MQNP…ISVN), 83–113 (DYRS…SYNR), and 168–239 (TLPS…KAFR). A compositionally biased stretch (polar residues) spans 13 to 64 (NQGSSSMATYNASEKNLNEHPSPQIAQPSTSQKLPYRINPTTTNGDTDISVN). Residues 88–101 (HQSPIHPSYIIPPH) show a composition bias toward low complexity. Residues 168–184 (TLPSRNTSVTTAPPSFQ) are compositionally biased toward polar residues. Residues 185–206 (NSADTAKNSADNNDNNDNVTKP) show a composition bias toward low complexity. Polar residues predominate over residues 213-222 (QLISSSGKTL). One can recognise a bZIP domain in the interval 221–284 (TLRNTRRAAQ…NDNNILIAQH (64 aa)). The interval 223 to 247 (RNTRRAAQNRTAQKAFRQRKEKYIK) is basic motif. Low complexity predominate over residues 227–237 (RAAQNRTAQKA). The interval 249–277 (LEQKSKIFDDLLAENNNFKSLNDSLRNDN) is leucine-zipper.

It belongs to the bZIP family. YAP subfamily. Homodimer.

It is found in the nucleus. Its function is as follows. Transcription activator involved in the regulation of genes expressed in response to environmental changes and metabolic requirements. According to genome-wide promoter binding and gene expression studies it regulates, among others, genes involved in ribosome biogenesis, protein synthesis, carbohydrate metabolism, and carbohydrate transport. It may also be involved in pleiotropic drug resistance. When overexpressed, it confers resistance to cisplatin, methylmethanosulfonate, and mitomycin C, and increases cellular tolerance to sodium and lithium. The polypeptide is AP-1-like transcription factor YAP6 (YAP6) (Saccharomyces cerevisiae (strain ATCC 204508 / S288c) (Baker's yeast)).